A 165-amino-acid polypeptide reads, in one-letter code: SsrA-binding protein (165 aa).

It belongs to the SmpB family.

The protein localises to the cytoplasm. In terms of biological role, required for rescue of stalled ribosomes mediated by trans-translation. Binds to transfer-messenger RNA (tmRNA), required for stable association of tmRNA with ribosomes. tmRNA and SmpB together mimic tRNA shape, replacing the anticodon stem-loop with SmpB. tmRNA is encoded by the ssrA gene; the 2 termini fold to resemble tRNA(Ala) and it encodes a 'tag peptide', a short internal open reading frame. During trans-translation Ala-aminoacylated tmRNA acts like a tRNA, entering the A-site of stalled ribosomes, displacing the stalled mRNA. The ribosome then switches to translate the ORF on the tmRNA; the nascent peptide is terminated with the 'tag peptide' encoded by the tmRNA and targeted for degradation. The ribosome is freed to recommence translation, which seems to be the essential function of trans-translation. The protein is SsrA-binding protein of Prochlorococcus marinus (strain MIT 9515).